The primary structure comprises 252 residues: Phosphoribosylformylglycinamidine synthase subunit PurQ (252 aa).

The 232-residue stretch at 6–237 (VGVVVFPGSN…FAHLAGTKRS (232 aa)) folds into the Glutamine amidotransferase type-1 domain. Cys89 (nucleophile) is an active-site residue. Catalysis depends on residues His206 and Glu208.

As to quaternary structure, part of the FGAM synthase complex composed of 1 PurL, 1 PurQ and 2 PurS subunits.

It is found in the cytoplasm. The enzyme catalyses N(2)-formyl-N(1)-(5-phospho-beta-D-ribosyl)glycinamide + L-glutamine + ATP + H2O = 2-formamido-N(1)-(5-O-phospho-beta-D-ribosyl)acetamidine + L-glutamate + ADP + phosphate + H(+). It carries out the reaction L-glutamine + H2O = L-glutamate + NH4(+). The protein operates within purine metabolism; IMP biosynthesis via de novo pathway; 5-amino-1-(5-phospho-D-ribosyl)imidazole from N(2)-formyl-N(1)-(5-phospho-D-ribosyl)glycinamide: step 1/2. In terms of biological role, part of the phosphoribosylformylglycinamidine synthase complex involved in the purines biosynthetic pathway. Catalyzes the ATP-dependent conversion of formylglycinamide ribonucleotide (FGAR) and glutamine to yield formylglycinamidine ribonucleotide (FGAM) and glutamate. The FGAM synthase complex is composed of three subunits. PurQ produces an ammonia molecule by converting glutamine to glutamate. PurL transfers the ammonia molecule to FGAR to form FGAM in an ATP-dependent manner. PurS interacts with PurQ and PurL and is thought to assist in the transfer of the ammonia molecule from PurQ to PurL. The sequence is that of Phosphoribosylformylglycinamidine synthase subunit PurQ from Chlorobaculum parvum (strain DSM 263 / NCIMB 8327) (Chlorobium vibrioforme subsp. thiosulfatophilum).